The sequence spans 152 residues: Large ribosomal subunit protein bL17 (152 aa).

A disordered region spans residues 121–140; it reads APSASQKTGKQDRAKRVKGS.

It belongs to the bacterial ribosomal protein bL17 family. Part of the 50S ribosomal subunit. Contacts protein L32.

This is Large ribosomal subunit protein bL17 from Pelodictyon phaeoclathratiforme (strain DSM 5477 / BU-1).